Here is a 270-residue protein sequence, read N- to C-terminus: Aliphatic sulfonates import ATP-binding protein SsuB 3 (270 aa).

The ABC transporter domain maps to 17-238; it reads LAVQNLKKAF…ARGSHRLAAL (222 aa). 49-56 contacts ATP; it reads GRSGCGKS.

This sequence belongs to the ABC transporter superfamily. Aliphatic sulfonates importer (TC 3.A.1.17.2) family. As to quaternary structure, the complex is composed of two ATP-binding proteins (SsuB), two transmembrane proteins (SsuC) and a solute-binding protein (SsuA).

Its subcellular location is the cell inner membrane. It carries out the reaction ATP + H2O + aliphatic sulfonate-[sulfonate-binding protein]Side 1 = ADP + phosphate + aliphatic sulfonateSide 2 + [sulfonate-binding protein]Side 1.. Functionally, part of the ABC transporter complex SsuABC involved in aliphatic sulfonates import. Responsible for energy coupling to the transport system. The polypeptide is Aliphatic sulfonates import ATP-binding protein SsuB 3 (Pseudomonas syringae pv. tomato (strain ATCC BAA-871 / DC3000)).